Consider the following 307-residue polypeptide: S-methyl-5'-thioadenosine phosphorylase (307 aa).

Phosphate is bound by residues Thr-20, 62–63 (RH), and 95–96 (SA). Met-197 lines the substrate pocket. Ser-198 provides a ligand contact to phosphate. 221–223 (DYD) provides a ligand contact to substrate.

The protein belongs to the PNP/MTAP phosphorylase family. MTAP subfamily. As to quaternary structure, homotrimer.

It is found in the cytoplasm. It localises to the nucleus. It carries out the reaction S-methyl-5'-thioadenosine + phosphate = 5-(methylsulfanyl)-alpha-D-ribose 1-phosphate + adenine. It participates in amino-acid biosynthesis; L-methionine biosynthesis via salvage pathway; S-methyl-5-thio-alpha-D-ribose 1-phosphate from S-methyl-5'-thioadenosine (phosphorylase route): step 1/1. In terms of biological role, catalyzes the reversible phosphorylation of S-methyl-5'-thioadenosine (MTA) to adenine and 5-methylthioribose-1-phosphate. Involved in the breakdown of MTA, a major by-product of polyamine biosynthesis. Responsible for the first step in the methionine salvage pathway after MTA has been generated from S-adenosylmethionine. Has broad substrate specificity with 6-aminopurine nucleosides as preferred substrates. This is S-methyl-5'-thioadenosine phosphorylase from Fusarium vanettenii (strain ATCC MYA-4622 / CBS 123669 / FGSC 9596 / NRRL 45880 / 77-13-4) (Fusarium solani subsp. pisi).